Here is a 561-residue protein sequence, read N- to C-terminus: uncharacterized protein (561 aa).

The next 6 membrane-spanning stretches (helical) occupy residues 10-29 (LLRNNPEIALFLAIAIGYWI), 34-56 (FGSLQIGGVAGSLLAAVLISQIG), 63-80 (LKTVLFALFIYAVGFQSG), 95-117 (VLMAFVLAISGLFTVLAVARMFH), 122-144 (LAAGVAAGGLTQSAIIGTASSAL), and 164-186 (GYAVTYIFGSLAPIIICVNILPW). 2 consecutive RCK C-terminal domains span residues 205–287 (QGMA…LLGE) and 294–376 (HDMD…ELGS). 5 helical membrane passes run 386 to 403 (LVFHGVGLVVGLLIGLIV), 407 to 429 (GSIPLTLGSGGGALLSGLLFGWY), 442 to 464 (AASTLLVDFGLSGFVAVTGLQTG), 479 to 501 (FMLGVVVSIVPLIITMLFGRYVL), and 538 to 560 (SFAITYAIANVLLTLLGPLVVAF).

The protein belongs to the AAE transporter (TC 2.A.81) family.

It is found in the cell membrane. This is an uncharacterized protein from Zymomonas mobilis subsp. mobilis (strain ATCC 31821 / ZM4 / CP4).